The primary structure comprises 261 residues: Imidazole glycerol phosphate synthase subunit HisF (261 aa).

Catalysis depends on residues Asp11 and Asp130.

Belongs to the HisA/HisF family. Heterodimer of HisH and HisF.

The protein localises to the cytoplasm. It catalyses the reaction 5-[(5-phospho-1-deoxy-D-ribulos-1-ylimino)methylamino]-1-(5-phospho-beta-D-ribosyl)imidazole-4-carboxamide + L-glutamine = D-erythro-1-(imidazol-4-yl)glycerol 3-phosphate + 5-amino-1-(5-phospho-beta-D-ribosyl)imidazole-4-carboxamide + L-glutamate + H(+). The protein operates within amino-acid biosynthesis; L-histidine biosynthesis; L-histidine from 5-phospho-alpha-D-ribose 1-diphosphate: step 5/9. Functionally, IGPS catalyzes the conversion of PRFAR and glutamine to IGP, AICAR and glutamate. The HisF subunit catalyzes the cyclization activity that produces IGP and AICAR from PRFAR using the ammonia provided by the HisH subunit. The protein is Imidazole glycerol phosphate synthase subunit HisF of Heliobacterium mobile (Heliobacillus mobilis).